We begin with the raw amino-acid sequence, 457 residues long: MKKLWGGRFQKTPEKWVDEFGASIHFDKQLVKEDLTGSLAHASMLNTCGILDDEEAATIKDGLNKLMKKAEADELEFSVDYEDIHLNLEKMLIDEIGPLGGKLHTARSRNDQVATDMHLYLNNQVEHIIELISSFQTVLVEKAEQHVETIFPGYTHLQRAQPISFAHHMLAYFWMLERDKARFQDSLKRINVSPLGCGALAGTTFPIDREYTAELLGFDHIYENSLDGVSDRDFILEFLSNSSLVMMHLSRLCEEIILWCSQEFKFIELDDTYATGSSMMPQKKNPDMAELIRGKTGRVYGNLMGLLTIMKGLPLTYNKDLQEDKEGMFDTVKTIAGSLQIFTGMIQTMTVNEDVMKKATKEDFSNATEVADYLAKKGMPFREAHEIVGKLVYTCIQEGIYLSDLPFETFTEASDLFEEDIYTVLDPYVAVEKRTSAGGTGFKQIQLALEKAKACLA.

It belongs to the lyase 1 family. Argininosuccinate lyase subfamily.

It is found in the cytoplasm. The catalysed reaction is 2-(N(omega)-L-arginino)succinate = fumarate + L-arginine. Its pathway is amino-acid biosynthesis; L-arginine biosynthesis; L-arginine from L-ornithine and carbamoyl phosphate: step 3/3. The polypeptide is Argininosuccinate lyase (Bacillus pumilus (strain SAFR-032)).